The chain runs to 106 residues: CDGSH iron-sulfur domain-containing protein 1 (106 aa).

Position 2 is an N-acetylserine (Ser2). Residues 10-29 form a helical; Signal-anchor for type III membrane protein membrane-spanning segment; it reads EWIAAVTIAAGTAAIGYLAY. At 30-106 the chain is on the cytoplasmic side; it reads KRFYVKDHRN…GPLIIKKKDT (77 aa). Lys40 participates in a covalent cross-link: Glycyl lysine isopeptide (Lys-Gly) (interchain with G-Cter in ubiquitin). Residue Lys53 is the Schiff-base intermediate with pyridoxal 5'-phosphate of the active site. An N6-acetyllysine; alternate mark is found at Lys53 and Lys66. Residues Lys53 and Lys66 each participate in a glycyl lysine isopeptide (Lys-Gly) (interchain with G-Cter in ubiquitin); alternate cross-link. 2 residues coordinate [2Fe-2S] cluster: Cys70 and Cys72. Glycyl lysine isopeptide (Lys-Gly) (interchain with G-Cter in ubiquitin) cross-links involve residues Lys76 and Lys77. Cys81 and His85 together coordinate [2Fe-2S] cluster. Residues 84–106 are disordered; it reads SHTKHNEETGDNVGPLIIKKKDT. Lys87 participates in a covalent cross-link: Glycyl lysine isopeptide (Lys-Gly) (interchain with G-Cter in ubiquitin). Lys102 is modified (N6-acetyllysine; alternate). Residue Lys102 forms a Glycyl lysine isopeptide (Lys-Gly) (interchain with G-Cter in ubiquitin); alternate linkage. Glycyl lysine isopeptide (Lys-Gly) (interchain with G-Cter in ubiquitin) cross-links involve residues Lys103 and Lys104.

This sequence belongs to the CISD protein family. As to quaternary structure, homodimer. Requires [2Fe-2S] cluster as cofactor. Pyridoxal 5'-phosphate serves as cofactor. Post-translationally, ubiquitinated by PRKN during mitophagy, leading to its degradation and enhancement of mitophagy. Deubiquitinated by USP30.

It localises to the mitochondrion outer membrane. It catalyses the reaction L-cysteine + 2-oxoglutarate = 2-oxo-3-sulfanylpropanoate + L-glutamate. L-cysteine transaminase that catalyzes the reversible transfer of the amino group from L-cysteine to the alpha-keto acid 2-oxoglutarate to respectively form 2-oxo-3-sulfanylpropanoate and L-glutamate. The catalytic cycle occurs in the presence of pyridoxal 5'-phosphate (PLP) cofactor that facilitates transamination by initially forming an internal aldimine with the epsilon-amino group of active site Lys-55 residue on the enzyme (PLP-enzyme aldimine), subsequently displaced by formation of an external aldimine with the substrate amino group (PLP-L-cysteine aldimine). The external aldimine is further deprotonated to form a carbanion intermediate, which in the presence of 2-oxoglutarate regenerates PLP yielding final products 2-oxo-3-sulfanylpropanoate and L-glutamate. The proton transfer in carbanion intermediate is suggested to be controlled by the active site lysine residue, whereas PLP stabilizes carbanion structure through electron delocalization, also known as the electron sink effect. Plays a key role in regulating maximal capacity for electron transport and oxidative phosphorylation. May be involved in iron-sulfur cluster shuttling and/or in redox reactions. Can transfer the [2Fe-2S] cluster to an apo-acceptor protein only when in the oxidation state, likely serving as a redox sensor that regulates mitochondrial iron-sulfur cluster assembly and iron trafficking upon oxidative stress. The sequence is that of CDGSH iron-sulfur domain-containing protein 1 (CISD1) from Bos taurus (Bovine).